The following is a 390-amino-acid chain: Sister chromatid cohesion protein DCC1 (390 aa).

The protein belongs to the DCC1 family. As to quaternary structure, component of the ctf18-RFC complex which consists of ctf18, ctf8, dscc1 and the RFC complex.

It localises to the nucleus. Its function is as follows. Loads pcna onto primed templates regulating velocity, spacing and restart activity of replication forks. May couple DNA replication to sister chromatid cohesion. The polypeptide is Sister chromatid cohesion protein DCC1 (dscc1) (Xenopus laevis (African clawed frog)).